The sequence spans 143 residues: Transcriptional regulator MraZ (143 aa).

2 consecutive SpoVT-AbrB domains span residues 5–47 (EYQH…PQDE) and 76–119 (AAEL…STEK).

It belongs to the MraZ family. Forms oligomers.

Its subcellular location is the cytoplasm. The protein localises to the nucleoid. The sequence is that of Transcriptional regulator MraZ from Syntrophomonas wolfei subsp. wolfei (strain DSM 2245B / Goettingen).